The primary structure comprises 240 residues: Orotidine 5'-phosphate decarboxylase (240 aa).

Substrate is bound by residues aspartate 10, lysine 33, 60–69, threonine 123, arginine 185, glutamine 194, glycine 214, and arginine 215; that span reads DLKLHDIPNT. The active-site Proton donor is the lysine 62.

Belongs to the OMP decarboxylase family. Type 1 subfamily. As to quaternary structure, homodimer.

It catalyses the reaction orotidine 5'-phosphate + H(+) = UMP + CO2. It participates in pyrimidine metabolism; UMP biosynthesis via de novo pathway; UMP from orotate: step 2/2. Catalyzes the decarboxylation of orotidine 5'-monophosphate (OMP) to uridine 5'-monophosphate (UMP). The protein is Orotidine 5'-phosphate decarboxylase of Lactobacillus delbrueckii subsp. bulgaricus (strain ATCC 11842 / DSM 20081 / BCRC 10696 / JCM 1002 / NBRC 13953 / NCIMB 11778 / NCTC 12712 / WDCM 00102 / Lb 14).